The sequence spans 328 residues: UPF0421 protein SE_1574 (328 aa).

4 consecutive transmembrane segments (helical) span residues 26 to 46 (LFCM…IVTI), 61 to 81 (LPAT…FGDQ), 109 to 129 (AVLT…FNFF), and 132 to 152 (LLTA…ILPP).

It belongs to the UPF0421 family.

It is found in the cell membrane. The polypeptide is UPF0421 protein SE_1574 (Staphylococcus epidermidis (strain ATCC 12228 / FDA PCI 1200)).